Consider the following 485-residue polypeptide: 1-aminocyclopropane-1-carboxylate synthase 2 (485 aa).

Residues Glu55 and Tyr92 each contribute to the substrate site. Lys278 bears the N6-(pyridoxal phosphate)lysine mark. Phosphoserine is present on Ser460.

This sequence belongs to the class-I pyridoxal-phosphate-dependent aminotransferase family. As to quaternary structure, homodimer and heterodimer. In vivo, the relevance of heterodimerization with other ACS enzymes is however unsure. Pyridoxal 5'-phosphate serves as cofactor. Post-translationally, phosphorylated on Ser 460; phosphorylation may regulate its turnover. May be processed at its C-terminus.

The catalysed reaction is S-adenosyl-L-methionine = 1-aminocyclopropane-1-carboxylate + S-methyl-5'-thioadenosine + H(+). It functions in the pathway alkene biosynthesis; ethylene biosynthesis via S-adenosyl-L-methionine; ethylene from S-adenosyl-L-methionine: step 1/2. 1-aminocyclopropane-1-carboxylate synthase (ACS) enzymes catalyze the conversion of S-adenosyl-L-methionine (SAM) into 1-aminocyclopropane-1-carboxylate (ACC), a direct precursor of ethylene. The polypeptide is 1-aminocyclopropane-1-carboxylate synthase 2 (ACS2) (Solanum lycopersicum (Tomato)).